The primary structure comprises 198 residues: Virion membrane protein A17 precursor homolog (198 aa).

Residues 1–55 (MDNNYLNYYNVFEEFDAGAGIKEKELFTEEQQLSFLPKKGLGNGGFDGVERLYSN) lie on the Virion surface side of the membrane. Residues 56–76 (IINNNDIKSLLALIMLVFAIN) form a helical membrane-spanning segment. Residues 77–145 (TNSLVALIFI…TSKISKGFKR (69 aa)) are Intravirion-facing. A helical transmembrane segment spans residues 146–166 (AIDVVLLVILGFYIVKIYGID). Topologically, residues 167-198 (RQISIPSRRYCRQMSGPSSLENLNAFQTHSNY) are virion surface. Tyr198 is modified (phosphotyrosine).

It belongs to the chordopoxvirinae A17 family. Interacts (via N-terminus) with D13 scaffold; this interaction helps D13 to associate with membranes. Interacts with A14. Interacts with A27; this interaction allows A27 to be anchored in the mature virion (MV) membrane. Part of a complex composed of A17, A25, A26 and A27. In terms of processing, the 22 kDa precursor is probably cleaved by the I7 protease during virus maturation. Phosphorylated on tyrosine and threonine. Its phosphorylation state is regulated by the F10 kinase and the H1 phosphatase. Phosphorylation by F10 kinase seems to be required to form the membranes associated with IV.

It localises to the virion membrane. Envelope protein which participates in virus morphogenesis. Needed for an early step in viral crescent membrane formation by interacting with D13 scaffold protein. Its interaction with D13 scaffold protein leads to the formation of rigid, crescent-shaped membranes that assemble around the cytoplasmic virus factory. Membrane anchor for the protein A27. A17-A27 virus envelope protein might be involved in fusion or attachment, and can further associate to A26. This is Virion membrane protein A17 precursor homolog from Fowlpox virus (strain NVSL) (FPV).